We begin with the raw amino-acid sequence, 107 residues long: U1-lycotoxin-Ls1g (107 aa).

An N-terminal signal peptide occupies residues Met1–Ser20. The propeptide occupies Glu21–Arg41. Intrachain disulfides connect Cys51/Cys68, Cys58/Cys86, and Cys70/Cys84.

It belongs to the neurotoxin 19 (CSTX) family. 04 (U1-Lctx) subfamily. In terms of tissue distribution, expressed by the venom gland.

It is found in the secreted. The chain is U1-lycotoxin-Ls1g from Lycosa singoriensis (Wolf spider).